The following is a 237-amino-acid chain: Concanavalin-Br (237 aa).

Mn(2+) is bound by residues E8 and D10. Positions 10, 12, 14, and 19 each coordinate Ca(2+). Residue Y12 participates in a carbohydrate binding. The Mn(2+) site is built by D19, H24, and S34. 99–100 contacts a carbohydrate; that stretch reads LY. Residue D208 participates in Ca(2+) binding. R228 contributes to the a carbohydrate binding site.

This sequence belongs to the leguminous lectin family. As to quaternary structure, homotetramer.

Glucose/D-mannose specific lectin. Has anti-inflammatory activity in rats. Induces histamine release in mast cells from hamster and rat. Induces lymphocyte proliferation and IFNG production. Shows toxicity against the aquatic snail B.glabrata at concentrations higher than 20 ug/ml. The chain is Concanavalin-Br from Canavalia brasiliensis (Brazilian jack bean).